A 526-amino-acid chain; its full sequence is Rho guanine nucleotide exchange factor 3 (526 aa).

Residues 20 to 40 (ELPPASGPAKDAEEPSNKRVK) are disordered. Phosphoserine is present on residues Ser-47 and Ser-70. Residues 122-304 (KRQEAIFELS…QGIVAEINTK (183 aa)) enclose the DH domain. In terms of domain architecture, PH spans 291–449 (INIIQGIVAE…WLNCIRQAKE (159 aa)). Residues 464–526 (EGSFLNPTTG…GNSRHGESNV (63 aa)) are disordered. Residues 466-475 (SFLNPTTGSR) show a composition bias toward polar residues.

As to quaternary structure, interacts with RHOA and RHOB.

The protein localises to the cytoplasm. Its function is as follows. Acts as a guanine nucleotide exchange factor (GEF) for RhoA and RhoB GTPases. In Pongo abelii (Sumatran orangutan), this protein is Rho guanine nucleotide exchange factor 3 (ARHGEF3).